Reading from the N-terminus, the 470-residue chain is Ribosomal protein uS12 methylthiotransferase RimO (470 aa).

Residues 4–120 (TRVYLHTLGC…IARVVSDAQA (117 aa)) enclose the MTTase N-terminal domain. 6 residues coordinate [4Fe-4S] cluster: cysteine 13, cysteine 49, cysteine 83, cysteine 155, cysteine 159, and cysteine 162. Residues 141 to 371 (SLPSHTAYLK…MALQQEISRE (231 aa)) enclose the Radical SAM core domain. A TRAM domain is found at 374–442 (RAMVGRRLEV…EYDLVGHVVA (69 aa)). The segment at 447–470 (RARRPLPAPAGGETPRRGGLPVVG) is disordered.

It belongs to the methylthiotransferase family. RimO subfamily. It depends on [4Fe-4S] cluster as a cofactor.

The protein localises to the cytoplasm. It catalyses the reaction L-aspartate(89)-[ribosomal protein uS12]-hydrogen + (sulfur carrier)-SH + AH2 + 2 S-adenosyl-L-methionine = 3-methylsulfanyl-L-aspartate(89)-[ribosomal protein uS12]-hydrogen + (sulfur carrier)-H + 5'-deoxyadenosine + L-methionine + A + S-adenosyl-L-homocysteine + 2 H(+). Its function is as follows. Catalyzes the methylthiolation of an aspartic acid residue of ribosomal protein uS12. This chain is Ribosomal protein uS12 methylthiotransferase RimO, found in Anaeromyxobacter sp. (strain Fw109-5).